The sequence spans 78 residues: Small ribosomal subunit protein bS18 (78 aa).

Belongs to the bacterial ribosomal protein bS18 family. In terms of assembly, part of the 30S ribosomal subunit. Forms a tight heterodimer with protein bS6.

Functionally, binds as a heterodimer with protein bS6 to the central domain of the 16S rRNA, where it helps stabilize the platform of the 30S subunit. This is Small ribosomal subunit protein bS18 from Thermobifida fusca (strain YX).